A 337-amino-acid chain; its full sequence is Putative high mobility group B protein 11 (337 aa).

One can recognise an ARID domain in the interval 34-125 (VRNPELFWEM…MLFEFEHLYY (92 aa)). Disordered stretches follow at residues 197–221 (TKRGKKKAKSSQGDSHKPPKRQRTG) and 298–337 (AGTSASAAETADEASQENLAKTDACTSASSAAETEDEVSQ). A DNA-binding region (HMG box) is located at residues 215–282 (PKRQRTGYNF…RYKMEILQYR (68 aa)). Residues 319 to 329 (TDACTSASSAA) are compositionally biased toward low complexity.

It belongs to the HMGB family.

It is found in the nucleus. In terms of biological role, binds preferentially DNA with A/T-rich content. The polypeptide is Putative high mobility group B protein 11 (HMGB11) (Arabidopsis thaliana (Mouse-ear cress)).